Reading from the N-terminus, the 459-residue chain is Glutamyl-tRNA reductase (459 aa).

Substrate is bound by residues 49–52 (TCNR), Ser109, 114–116 (EQQ), and Gln120. Cys50 functions as the Nucleophile in the catalytic mechanism. 189-194 (GAGAMG) is a binding site for NADP(+).

This sequence belongs to the glutamyl-tRNA reductase family. Homodimer.

It carries out the reaction (S)-4-amino-5-oxopentanoate + tRNA(Glu) + NADP(+) = L-glutamyl-tRNA(Glu) + NADPH + H(+). The protein operates within porphyrin-containing compound metabolism; protoporphyrin-IX biosynthesis; 5-aminolevulinate from L-glutamyl-tRNA(Glu): step 1/2. Functionally, catalyzes the NADPH-dependent reduction of glutamyl-tRNA(Glu) to glutamate 1-semialdehyde (GSA). The protein is Glutamyl-tRNA reductase of Mycolicibacterium paratuberculosis (strain ATCC BAA-968 / K-10) (Mycobacterium paratuberculosis).